The chain runs to 494 residues: Alpha-amylase-related protein (494 aa).

The signal sequence occupies residues 1-20 (MIKFALALTLCLAGASLSLA). Position 21 is a pyrrolidone carboxylic acid (glutamine 21). Cysteine 48 and cysteine 104 are disulfide-bonded. Ca(2+)-binding residues include asparagine 118, glutamine 169, and aspartate 178. A disulfide bond links cysteine 157 and cysteine 171. Arginine 206 provides a ligand contact to chloride. Catalysis depends on aspartate 208, which acts as the Nucleophile. Histidine 212 is a Ca(2+) binding site. Residue glutamate 245 is the Proton donor of the active site. Residues asparagine 308 and arginine 343 each contribute to the chloride site. 3 disulfide bridges follow: cysteine 376-cysteine 382, cysteine 418-cysteine 441, and cysteine 448-cysteine 460.

Belongs to the glycosyl hydrolase 13 family. As to quaternary structure, monomer. Requires Ca(2+) as cofactor. The cofactor is chloride.

It is found in the secreted. It carries out the reaction Endohydrolysis of (1-&gt;4)-alpha-D-glucosidic linkages in polysaccharides containing three or more (1-&gt;4)-alpha-linked D-glucose units.. In Drosophila serrata (Fruit fly), this protein is Alpha-amylase-related protein (Amyrel).